A 238-amino-acid polypeptide reads, in one-letter code: Ribonuclease PH (238 aa).

Residues R86 and 124 to 126 contribute to the phosphate site; that span reads GTR.

The protein belongs to the RNase PH family. Homohexameric ring arranged as a trimer of dimers.

It carries out the reaction tRNA(n+1) + phosphate = tRNA(n) + a ribonucleoside 5'-diphosphate. Its function is as follows. Phosphorolytic 3'-5' exoribonuclease that plays an important role in tRNA 3'-end maturation. Removes nucleotide residues following the 3'-CCA terminus of tRNAs; can also add nucleotides to the ends of RNA molecules by using nucleoside diphosphates as substrates, but this may not be physiologically important. Probably plays a role in initiation of 16S rRNA degradation (leading to ribosome degradation) during starvation. This chain is Ribonuclease PH, found in Klebsiella pneumoniae (strain 342).